The following is a 347-amino-acid chain: NADH-quinone oxidoreductase subunit H 1 (347 aa).

9 helical membrane-spanning segments follow: residues 13-33 (IIMI…IAYV), 50-70 (PNVV…KFVF), 82-102 (AVFL…WAVV), 115-135 (VGIL…IMGG), 161-181 (IGFV…TDIV), 198-218 (FLDW…ISAL), 263-283 (CALT…IWIL), 286-306 (VPGI…FAMV), and 321-341 (LGWK…AFVL).

The protein belongs to the complex I subunit 1 family. In terms of assembly, NDH-1 is composed of 14 different subunits. Subunits NuoA, H, J, K, L, M, N constitute the membrane sector of the complex.

Its subcellular location is the cell inner membrane. It carries out the reaction a quinone + NADH + 5 H(+)(in) = a quinol + NAD(+) + 4 H(+)(out). Functionally, NDH-1 shuttles electrons from NADH, via FMN and iron-sulfur (Fe-S) centers, to quinones in the respiratory chain. The immediate electron acceptor for the enzyme in this species is believed to be ubiquinone. Couples the redox reaction to proton translocation (for every two electrons transferred, four hydrogen ions are translocated across the cytoplasmic membrane), and thus conserves the redox energy in a proton gradient. This subunit may bind ubiquinone. This chain is NADH-quinone oxidoreductase subunit H 1, found in Rhizobium etli (strain ATCC 51251 / DSM 11541 / JCM 21823 / NBRC 15573 / CFN 42).